Consider the following 469-residue polypeptide: Cell division protein FtsP (469 aa).

Residues 1–27 (MKLSRRQFLQRSTLAGVATVTPTSLWA) constitute a signal peptide (tat-type signal).

Belongs to the FtsP family. Predicted to be exported by the Tat system. The position of the signal peptide cleavage has not been experimentally proven.

It localises to the periplasm. In terms of biological role, cell division protein that is required for growth during stress conditions. May be involved in protecting or stabilizing the divisomal assembly under conditions of stress. The chain is Cell division protein FtsP from Glaesserella parasuis serovar 5 (strain SH0165) (Haemophilus parasuis).